A 678-amino-acid chain; its full sequence is Protein CASP (678 aa).

Residues 1-619 (MAANVGSMSQ…LILSNKTART (619 aa)) lie on the Cytoplasmic side of the membrane. Coiled coils occupy residues 16 to 40 (DLQQ…ESEQ), 67 to 374 (LLKS…TLKS), 427 to 454 (HLTE…TIQS), and 502 to 556 (LSII…FLQS). Residue S586 is modified to Phosphoserine. The helical; Anchor for type IV membrane protein transmembrane segment at 620–640 (IGFFYTLFLHCLVFLVLYKLA) threads the bilayer. The Lumenal portion of the chain corresponds to 641 to 678 (WSESVERDCAATCAKKFADHLHKFHESDNGAAAGDLWQ).

It belongs to the CASP family. Homodimer; disulfide-linked. Interacts with GOLGA5. As to expression, ubiquitously expressed.

It is found in the golgi apparatus membrane. May be involved in intra-Golgi retrograde transport. The chain is Protein CASP (Cux1) from Mus musculus (Mouse).